A 198-amino-acid polypeptide reads, in one-letter code: Phycocyanobilin lyase CpcT homolog (198 aa).

The protein belongs to the CpcT/CpeT biliprotein lyase family.

Its function is as follows. Covalently attaches a chromophore to Cys residue(s) of phycobiliproteins. In vitro is not seen to act as a chromophore lyase for ApcA1, ApcA2, ApcB, ApcD, ApcF, CpcB or PecB, the lyase activity is therefore unsure. This chain is Phycocyanobilin lyase CpcT homolog (cpcT2), found in Nostoc sp. (strain PCC 7120 / SAG 25.82 / UTEX 2576).